A 391-amino-acid chain; its full sequence is MVKLENSRKPEKISNKNIPMSDFVVNLDHGDPTAYEEYWRKMGDRCTVTIRGCDLMSYFSDMTNLCWFLEPELEDAIKDLHGVVGNAATEDRYIVVGTGSTQLCQAAVHALSSLARSQPVSVVAAAPFYSTYVEETTYVRSGMYKWEGDAWGFDKKGPYIELVTSPNNPDGTIRETVVNRPDDDEAKVIHDFAYYWPHYTPITRRQDHDIMLFTFSKITGHAGSRIGWALVKDKEVAKKMVEYIIVNSIGVSKESQVRTAKILNVLKETCKSESESENFFKYGREMMKNRWEKLREVVKESDAFTLPKYPEAFCNYFGKSLESYPAFAWLGTKEETDLVSELRRHKVMSRAGERCGSDKKHVRVSMLSREDVFNVFLERLANMKLIKSIDL.

Pyridoxal 5'-phosphate contacts are provided by residues Tyr-58, 100–101 (ST), Asn-168, 191–194 (DFAY), 214–217 (TFSK), and Arg-225. Lys-217 bears the N6-(pyridoxal phosphate)lysine mark.

The protein belongs to the alliinase family. Pyridoxal 5'-phosphate is required as a cofactor. Expressed at the leaf margin and in the vasculature of emerging young leaves. Expressed in the quiescent center and in the vasculature of root tips. Detected in the shoot apical meristem, stems, sepals, stamen filaments, the shoot and root junction, the stigma and the base of the silique.

Its subcellular location is the cytoplasm. The enzyme catalyses L-tryptophan + 2-oxoglutarate = indole-3-pyruvate + L-glutamate. The catalysed reaction is L-tryptophan + pyruvate = indole-3-pyruvate + L-alanine. It participates in plant hormone metabolism; auxin biosynthesis. Inhibited by L-kynurenine. Its function is as follows. L-tryptophan aminotransferase involved in auxin (IAA) biosynthesis. Can convert L-tryptophan and pyruvate to indole-3-pyruvic acid (IPA) and alanine. Catalyzes the first step in IPA branch of the auxin biosynthetic pathway. Required for auxin production to initiate multiple change in growth in response to environmental and developmental cues. It is also active with phenylalanine, tyrosine, leucine, alanine, methionine and glutamine. Both TAA1 and TAR2 are required for maintaining proper auxin levels in roots, while TAA1, TAR1 and TAR2 are required for proper embryo patterning. Involved in the maintenance of the root stem cell niches and required for shade avoidance. This Arabidopsis thaliana (Mouse-ear cress) protein is L-tryptophan--pyruvate aminotransferase 1 (TAA1).